A 629-amino-acid polypeptide reads, in one-letter code: ATP-dependent DNA helicase II subunit 2 (629 aa).

A Ku domain is found at 254 to 476 (SGLNRKTAVE…GHQIDELMEQ (223 aa)). Positions 608–620 (DLETLLKRGEQHS) are enriched in basic and acidic residues. The disordered stretch occupies residues 608 to 629 (DLETLLKRGEQHSRGSPNNSNN).

The protein belongs to the ku80 family. In terms of assembly, heterodimer of YKU70/HDF1 and YKU80/HDF2. Interacts with SIR4.

The protein localises to the nucleus. It is found in the chromosome. The protein resides in the telomere. The catalysed reaction is ATP + H2O = ADP + phosphate + H(+). Single-stranded DNA-dependent ATP-dependent helicase. Involved in non-homologous end joining (NHEJ) DNA double strand break repair. DNA-binding is sequence-independent but has a high affinity to nicks in double-stranded DNA and to the ends of duplex DNA. Binds to naturally occurring chromosomal ends, and therefore provides chromosomal end protection. Appears to have a role in recruitment of telomerase and CDC13 to the telomere and the subsequent telomere elongation. Required also for telomere recombination to repair telomeric ends in the absence of telomerase. KU70, of the KU70/KU80 heterodimer, binds to the stem loop of TLC1, the RNA component of telomerase. Involved in telomere maintenance. Interacts with telomeric repeats and subtelomeric sequences thereby controlling telomere length and protecting against subtelomeric rearrangement. Maintains telomeric chromatin, which is involved in silencing the expression of genes located at the telomere. Required for mating-type switching. This Saccharomyces cerevisiae (strain ATCC 204508 / S288c) (Baker's yeast) protein is ATP-dependent DNA helicase II subunit 2 (YKU80).